Consider the following 296-residue polypeptide: GTPase Era (296 aa).

The region spanning 7–174 (KAGYISIVGR…TEVIRHYLPE (168 aa)) is the Era-type G domain. The segment at 15–22 (GRPNVGKS) is G1. 15 to 22 (GRPNVGKS) contacts GTP. The interval 41 to 45 (QTTRH) is G2. Residues 62–65 (DTPG) are G3. GTP-binding positions include 62 to 66 (DTPGF) and 123 to 126 (NKID). The tract at residues 123–126 (NKID) is G4. A G5 region spans residues 153–155 (VSA). A KH type-2 domain is found at 205–281 (IGEEVPYSVS…YLEIWVKVKS (77 aa)).

It belongs to the TRAFAC class TrmE-Era-EngA-EngB-Septin-like GTPase superfamily. Era GTPase family. As to quaternary structure, monomer.

The protein resides in the cytoplasm. It localises to the cell inner membrane. Its function is as follows. An essential GTPase that binds both GDP and GTP, with rapid nucleotide exchange. Plays a role in 16S rRNA processing and 30S ribosomal subunit biogenesis and possibly also in cell cycle regulation and energy metabolism. This is GTPase Era from Nitrosomonas eutropha (strain DSM 101675 / C91 / Nm57).